Reading from the N-terminus, the 242-residue chain is Transcriptional activator protein RaiR (242 aa).

Residues Lys-177 to Asn-242 form the HTH luxR-type domain. The segment at residues Ala-201–Ala-220 is a DNA-binding region (H-T-H motif).

Belongs to the autoinducer-regulated transcriptional regulatory protein family.

The protein is Transcriptional activator protein RaiR (raiR) of Rhizobium etli.